The primary structure comprises 500 residues: NF-kappa-B inhibitor cactus (500 aa).

A compositionally biased stretch (low complexity) spans 1–43 (MPSPTKAAEAATKATATSDCSCSAASVEQRAPSNAANPSSSLA). 2 disordered regions span residues 1–148 (MPSP…MRLK) and 171–212 (LNNL…APPS). Ser45 carries the phosphoserine; by PKC modification. Polar residues predominate over residues 69–86 (NETSDSGFISGPQSSQIF). Acidic residues predominate over residues 118–130 (IIDEEEDQEEQEK). Ser144 bears the Phosphoserine; by PKC mark. Positions 171-189 (LNNLGQSSSTQITGRSKVQ) are enriched in polar residues. Thr183 carries the phosphothreonine; by PKC modification. Over residues 190–212 (SSTASTANANPSGSGATSSAPPS) the composition is skewed to low complexity. ANK repeat units follow at residues 229 to 261 (DGDT…LLNI), 265 to 294 (VAQT…EPTV), 298 to 327 (HGNT…ATEI), 361 to 390 (DGER…DINA), and 395 to 424 (SGRT…KLNL). Phosphothreonine; by PKC occurs at positions 293 and 319. Ser395 is subject to Phosphoserine; by PKC.

The protein belongs to the NF-kappa-B inhibitor family. Phosphorylated isoform A binds to dorsal (dl); inhibits dl translocation to the nucleus and therefore from binding to DNA. In vitro, interacts with IKKbeta. Interacts with cactin and kappa-B-Ras. Post-translationally, activated IKKbeta phosphorylates cact. Expressed in ovary (at protein level).

The protein resides in the cytoplasm. Involved in the formation of the dorsoventral pattern. It inhibits nuclear translocation of the dorsal morphogen in the dorsal region of the embryo. Acts as a negative regulator of the NF-kappa-B (rel) signaling pathway. Cact is degraded by IKKbeta, this is essential for NF-kappa-B (rel) activation. This chain is NF-kappa-B inhibitor cactus (cact), found in Drosophila melanogaster (Fruit fly).